A 254-amino-acid chain; its full sequence is Low affinity immunoglobulin gamma Fc region receptor III-A (254 aa).

The N-terminal stretch at 1–20 is a signal peptide; the sequence is MWQLLLPTALLLLVSAGMRA. The Extracellular portion of the chain corresponds to 21–206; the sequence is EDLPKAVVFL…SSISSFFPPG (186 aa). Ig-like C2-type domains lie at 24–105 and 107–189; these read PKAV…LEVH and GWLL…VNIT. Intrachain disulfides connect Cys47/Cys89 and Cys128/Cys172. Asn187 carries an N-linked (GlcNAc...) asparagine glycan. A helical membrane pass occupies residues 207-229; it reads YQVSFCLVMVLLFAVDTGLYFSV. Residues 230-254 lie on the Cytoplasmic side of the membrane; the sequence is KKSVPSSTRDWEDHKFKWSKDPQDK.

In terms of assembly, forms a heterooligomeric complex with ITAM-containing signaling subunits, either a homodimer of CD247, a homodimer of FCER1G or a heterodimer of CD247 and FCER1G, to form a functional receptor complex. Interacts (via transmembrane domain) with signaling subunits; this interaction is a prerequisite for receptor complex expression on the cell surface and intracellular signal transduction. Binds the Fc region of antigen-complexed IgG with a preference for IgG1 and IgG3 isotypes. Interacts with CD2; this interaction is involved in NK cell activation and cytotoxicity. Interacts with S100A4; this interaction inhibits PKC-dependent phosphorylation of FCGR3A. Glycosylated. Glycosylation plays an inhibitory role in the interaction with IgG1 and IgG2. Post-translationally, undergoes rapid ectodomain shedding upon NK cell stimulation. The soluble form is produced by a proteolytic cleavage mediated by ADAM17. Repeated stimulation causes receptor shedding, a mechanism that allows for increased NK cell motility and detachment from opsonized target cells while avoiding activation-induced NK cell apoptosis. In terms of tissue distribution, lymphocytes and monocytes.

The protein resides in the cell membrane. Its subcellular location is the secreted. Its function is as follows. Receptor for the invariable Fc fragment of immunoglobulin gamma (IgG). Optimally activated upon binding of clustered antigen-IgG complexes displayed on cell surfaces, triggers lysis of antibody-coated cells, a process known as antibody-dependent cellular cytotoxicity (ADCC). Does not bind free monomeric IgG, thus avoiding inappropriate effector cell activation in the absence of antigenic trigger. Mediates IgG effector functions on natural killer (NK) cells. Binds antigen-IgG complexes generated upon infection and triggers NK cell-dependent cytokine production and degranulation to limit viral load and propagation. Involved in the generation of memory-like adaptive NK cells capable to produce high amounts of IFNG and to efficiently eliminate virus-infected cells via ADCC. Regulates NK cell survival and proliferation, in particular by preventing NK cell progenitor apoptosis. Fc-binding subunit that associates with CD247 and/or FCER1G adapters to form functional signaling complexes. Following the engagement of antigen-IgG complexes, triggers phosphorylation of immunoreceptor tyrosine-based activation motif (ITAM)-containing adapters with subsequent activation of phosphatidylinositol 3-kinase signaling and sustained elevation of intracellular calcium that ultimately drive NK cell activation. The ITAM-dependent signaling coupled to receptor phosphorylation by PKC mediates robust intracellular calcium flux that leads to production of pro-inflammatory cytokines, whereas in the absence of receptor phosphorylation it mainly activates phosphatidylinositol 3-kinase signaling leading to cell degranulation. Costimulates NK cells and trigger lysis of target cells independently of IgG binding. Mediates the antitumor activities of therapeutic antibodies. Upon ligation on monocytes triggers TNFA-dependent ADCC of IgG-coated tumor cells. Mediates enhanced ADCC in response to afucosylated IgGs. The polypeptide is Low affinity immunoglobulin gamma Fc region receptor III-A (Macaca mulatta (Rhesus macaque)).